Here is a 398-residue protein sequence, read N- to C-terminus: Acetate kinase 1 (398 aa).

A Mg(2+)-binding site is contributed by N9. K16 lines the ATP pocket. R89 is a binding site for substrate. D146 (proton donor/acceptor) is an active-site residue. ATP-binding positions include 206–210 (HLGNG), 281–283 (DCR), and 329–333 (GIGEN). A Mg(2+)-binding site is contributed by E384.

This sequence belongs to the acetokinase family. As to quaternary structure, homodimer. It depends on Mg(2+) as a cofactor. Mn(2+) is required as a cofactor.

It localises to the cytoplasm. The enzyme catalyses acetate + ATP = acetyl phosphate + ADP. It participates in metabolic intermediate biosynthesis; acetyl-CoA biosynthesis; acetyl-CoA from acetate: step 1/2. In terms of biological role, catalyzes the formation of acetyl phosphate from acetate and ATP. Can also catalyze the reverse reaction. This chain is Acetate kinase 1, found in Vibrio vulnificus (strain CMCP6).